The following is a 461-amino-acid chain: General transcription and DNA repair factor IIH subunit SSL1 (461 aa).

Residues 1–70 form a disordered region; that stretch reads MAPVVISESE…RLSNRNLQGS (70 aa). Positions 26-37 are enriched in basic and acidic residues; it reads VHFDGEGDDRVD. Residues 53–63 are compositionally biased toward basic residues; that stretch reads HVQRKKKKRLS. The 180-residue stretch at 125 to 304 folds into the VWFA domain; it reads SLILTLDCSE…THLKELFNEA (180 aa). The C4-type zinc finger occupies 349-366; sequence CPNCHSKVCSLPTVCPCC.

This sequence belongs to the GTF2H2 family. Component of the 7-subunit TFIIH core complex composed of XPB/SSL2, XPD/RAD3, SSL1, TFB1, TFB2, TFB4 and TFB5, which is active in NER. The core complex associates with the 3-subunit CTD-kinase module TFIIK composed of CCL1, KIN28 and TFB3 to form the 10-subunit holoenzyme (holo-TFIIH) active in transcription. An additionnal subunit, TFB6, plays a role in the dissociation of the SSL2 helicase from TFIIH after transcription initiation.

The protein resides in the nucleus. Component of the general transcription and DNA repair factor IIH (TFIIH) core complex, which is involved in general and transcription-coupled nucleotide excision repair (NER) of damaged DNA and, when complexed to TFIIK, in RNA transcription by RNA polymerase II. In NER, TFIIH acts by opening DNA around the lesion to allow the excision of the damaged oligonucleotide and its replacement by a new DNA fragment. In transcription, TFIIH has an essential role in transcription initiation. When the pre-initiation complex (PIC) has been established, TFIIH is required for promoter opening and promoter escape. Phosphorylation of the C-terminal tail (CTD) of the largest subunit of RNA polymerase II by the kinase module TFIIK controls the initiation of transcription. In Saccharomyces cerevisiae (strain ATCC 204508 / S288c) (Baker's yeast), this protein is General transcription and DNA repair factor IIH subunit SSL1 (SSL1).